The primary structure comprises 178 residues: CDP-archaeol synthase (178 aa).

Helical transmembrane passes span 3-23 (LLLLLFSAIWYILPAYVANAV), 56-76 (FFGILFGIITGILQHFIVILY), 91-111 (IILGFLLGTGALFGDMLGSFI), 123-143 (APLLDQMTFIVFALIFAYPLY), and 149-169 (LMVILLVISPIIHFSSNIIAY).

This sequence belongs to the CDP-archaeol synthase family. The cofactor is Mg(2+).

Its subcellular location is the cell membrane. The catalysed reaction is 2,3-bis-O-(geranylgeranyl)-sn-glycerol 1-phosphate + CTP + H(+) = CDP-2,3-bis-O-(geranylgeranyl)-sn-glycerol + diphosphate. It functions in the pathway membrane lipid metabolism; glycerophospholipid metabolism. In terms of biological role, catalyzes the formation of CDP-2,3-bis-(O-geranylgeranyl)-sn-glycerol (CDP-archaeol) from 2,3-bis-(O-geranylgeranyl)-sn-glycerol 1-phosphate (DGGGP) and CTP. This reaction is the third ether-bond-formation step in the biosynthesis of archaeal membrane lipids. This chain is CDP-archaeol synthase, found in Methanococcus maripaludis (strain C7 / ATCC BAA-1331).